Consider the following 466-residue polypeptide: Ribulose bisphosphate carboxylase (466 aa).

Position 111 (Asn-111) interacts with substrate. The active-site Proton acceptor is the Lys-166. Position 168 (Lys-168) interacts with substrate. Mg(2+)-binding residues include Lys-191, Asp-193, and Glu-194. Position 191 is an N6-carboxylysine (Lys-191). Catalysis depends on His-287, which acts as the Proton acceptor. Substrate is bound by residues Arg-288, His-321, and Ser-368.

Belongs to the RuBisCO large chain family. Type II subfamily. As to quaternary structure, homodimer. Mg(2+) serves as cofactor.

It carries out the reaction 2 (2R)-3-phosphoglycerate + 2 H(+) = D-ribulose 1,5-bisphosphate + CO2 + H2O. The catalysed reaction is D-ribulose 1,5-bisphosphate + O2 = 2-phosphoglycolate + (2R)-3-phosphoglycerate + 2 H(+). RuBisCO catalyzes two reactions: the carboxylation of D-ribulose 1,5-bisphosphate, the primary event in carbon dioxide fixation, as well as the oxidative fragmentation of the pentose substrate. Both reactions occur simultaneously and in competition at the same active site. This chain is Ribulose bisphosphate carboxylase (cbbM), found in Rhodospirillum rubrum.